Consider the following 307-residue polypeptide: Acetaldehyde dehydrogenase (307 aa).

12–15 (SGNI) contributes to the NAD(+) binding site. The active-site Acyl-thioester intermediate is the Cys127. NAD(+) is bound by residues 158 to 166 (SAGPGTRQN) and Asn278.

The protein belongs to the acetaldehyde dehydrogenase family. As to quaternary structure, monomer. Can also form a heterotetramer composed of two aldolase (TTHB246) and two dehydrogenase (TTHB247) subunits. Upon complex formation, the aldolase shows a 5-fold increase in substrate affinity, while the dehydrogenase shows a 3-fold decrease; the kcat values of each enzyme are reduced by 2-fold when they are in a complex.

It carries out the reaction acetaldehyde + NAD(+) + CoA = acetyl-CoA + NADH + H(+). The enzyme catalyses propanal + NAD(+) + CoA = propanoyl-CoA + NADH + H(+). In terms of biological role, catalyzes the conversion of acetaldehyde or propanal to acetyl-CoA or propanoyl-CoA, respectively, using NAD(+) and coenzyme A. The aldehyde substrates can be directly channeled from the aldolase TTHB246 to the dehydrogenase TTHB247. Is the final enzyme in the meta-cleavage pathway for the degradation of aromatic compounds. This Thermus thermophilus (strain ATCC 27634 / DSM 579 / HB8) protein is Acetaldehyde dehydrogenase.